Consider the following 208-residue polypeptide: Imidazole glycerol phosphate synthase subunit HisH (208 aa).

The Glutamine amidotransferase type-1 domain occupies 1–206 (MIVIIDYDTG…KEVIRSCKSS (206 aa)). Residue C79 is the Nucleophile of the active site. Catalysis depends on residues H181 and E183.

In terms of assembly, heterodimer of HisH and HisF.

The protein resides in the cytoplasm. The catalysed reaction is 5-[(5-phospho-1-deoxy-D-ribulos-1-ylimino)methylamino]-1-(5-phospho-beta-D-ribosyl)imidazole-4-carboxamide + L-glutamine = D-erythro-1-(imidazol-4-yl)glycerol 3-phosphate + 5-amino-1-(5-phospho-beta-D-ribosyl)imidazole-4-carboxamide + L-glutamate + H(+). It carries out the reaction L-glutamine + H2O = L-glutamate + NH4(+). Its pathway is amino-acid biosynthesis; L-histidine biosynthesis; L-histidine from 5-phospho-alpha-D-ribose 1-diphosphate: step 5/9. Functionally, IGPS catalyzes the conversion of PRFAR and glutamine to IGP, AICAR and glutamate. The HisH subunit catalyzes the hydrolysis of glutamine to glutamate and ammonia as part of the synthesis of IGP and AICAR. The resulting ammonia molecule is channeled to the active site of HisF. The chain is Imidazole glycerol phosphate synthase subunit HisH from Listeria welshimeri serovar 6b (strain ATCC 35897 / DSM 20650 / CCUG 15529 / CIP 8149 / NCTC 11857 / SLCC 5334 / V8).